We begin with the raw amino-acid sequence, 510 residues long: Zinc finger protein 692 (510 aa).

Disordered stretches follow at residues 1–20 and 121–306; these read MAASPADASRRRREKRRQLD and WGPS…EDTA. Phosphoserine is present on Ser161. The span at 163 to 172 shows a compositional bias: basic and acidic residues; that stretch reads CDERAQEARM. Over residues 188–201 the composition is skewed to acidic residues; the sequence is EDGEEEEEDEEEML. A Phosphoserine modification is found at Ser225. The span at 237–265 shows a compositional bias: low complexity; the sequence is APAPAAVPAPLASPSSSASSLGSGAPGPV. The span at 278–297 shows a compositional bias: polar residues; sequence QADQQTEPLASPGSQAQSAL. 5 consecutive C2H2-type zinc fingers follow at residues 322 to 347, 353 to 377, 383 to 405, 411 to 433, and 442 to 465; these read LPCDFPGCGRIFSNRQYLNHHKKYQH, FSCPEPACGKSFNFKKHLKEHVKLH, YICEFCARSFRTSSNLVIHRRIH, LQCEICGFTCRQKASLNWHRRKH, and FPCEFCGKRFEKPDSVAAHRSKSH. The residue at position 464 (Ser464) is a Phosphoserine.

The protein belongs to the krueppel C2H2-type zinc-finger protein family. Phosphorylation at Ser-464 results in loss of DNA-binding activity.

The protein localises to the nucleus. In terms of biological role, may act as an transcriptional repressor for PCK1 gene expression, in turn may participate in the hepatic gluconeogenesis regulation through the activated AMPK signaling pathway. The polypeptide is Zinc finger protein 692 (Bos taurus (Bovine)).